Consider the following 116-residue polypeptide: Regulator of ribonuclease activity B (116 aa).

This sequence belongs to the RraB family. As to quaternary structure, interacts with the C-terminal region of Rne.

The protein resides in the cytoplasm. Globally modulates RNA abundance by binding to RNase E (Rne) and regulating its endonucleolytic activity. Can modulate Rne action in a substrate-dependent manner by altering the composition of the degradosome. The protein is Regulator of ribonuclease activity B of Colwellia psychrerythraea (strain 34H / ATCC BAA-681) (Vibrio psychroerythus).